The chain runs to 243 residues: Segregation and condensation protein A (243 aa).

The protein belongs to the ScpA family. In terms of assembly, component of a cohesin-like complex composed of ScpA, ScpB and the Smc homodimer, in which ScpA and ScpB bind to the head domain of Smc. The presence of the three proteins is required for the association of the complex with DNA.

It localises to the cytoplasm. Its function is as follows. Participates in chromosomal partition during cell division. May act via the formation of a condensin-like complex containing Smc and ScpB that pull DNA away from mid-cell into both cell halves. The polypeptide is Segregation and condensation protein A (Staphylococcus haemolyticus (strain JCSC1435)).